The primary structure comprises 496 residues: Glutamyl-tRNA(Gln) amidotransferase subunit A (496 aa).

Active-site charge relay system residues include lysine 79 and serine 159. Serine 183 acts as the Acyl-ester intermediate in catalysis.

It belongs to the amidase family. GatA subfamily. As to quaternary structure, heterotrimer of A, B and C subunits.

It carries out the reaction L-glutamyl-tRNA(Gln) + L-glutamine + ATP + H2O = L-glutaminyl-tRNA(Gln) + L-glutamate + ADP + phosphate + H(+). Its function is as follows. Allows the formation of correctly charged Gln-tRNA(Gln) through the transamidation of misacylated Glu-tRNA(Gln) in organisms which lack glutaminyl-tRNA synthetase. The reaction takes place in the presence of glutamine and ATP through an activated gamma-phospho-Glu-tRNA(Gln). This Ruegeria pomeroyi (strain ATCC 700808 / DSM 15171 / DSS-3) (Silicibacter pomeroyi) protein is Glutamyl-tRNA(Gln) amidotransferase subunit A.